A 328-amino-acid chain; its full sequence is Malate dehydrogenase (328 aa).

Residue 11–17 (GAAGQIG) coordinates NAD(+). Positions 94 and 100 each coordinate substrate. Residues Asn107, Gln114, and 131 to 133 (VGN) contribute to the NAD(+) site. 2 residues coordinate substrate: Asn133 and Arg164. Catalysis depends on His189, which acts as the Proton acceptor.

It belongs to the LDH/MDH superfamily. MDH type 2 family.

The enzyme catalyses (S)-malate + NAD(+) = oxaloacetate + NADH + H(+). Its function is as follows. Catalyzes the reversible oxidation of malate to oxaloacetate. This Xanthomonas campestris pv. campestris (strain 8004) protein is Malate dehydrogenase.